The sequence spans 523 residues: FAD-dependent monooxygenase drtC (523 aa).

Residues 77-252 (TSLNSACIVL…TNFEVRAFPQ (176 aa)) enclose the FAD-binding PCMH-type domain.

It belongs to the oxygen-dependent FAD-linked oxidoreductase family. Requires FAD as cofactor.

The protein operates within secondary metabolite biosynthesis; terpenoid biosynthesis. Functionally, FAD-dependent monooxygenase; part of the gene cluster that mediates the biosynthesis of various drimane-type sesquiterpene esters, compounds that exhibit diverse biological activities and are widely present in eukaryotes. The pathway begins with the synthesis of the backbone drimenol by the terpene cyclase drtB using farnesyl pyrophosphate (FPP) as substrate. The cytochrome P450 monooxygenase drtD is then responsible for the hydroxylations at C-6, C-9 and C-12, as well as the oxidation of hydroxyl groups at C-6 and C-11 to a ketone and an aldehyde, respectively. Then, the biosynthesis can go in two directions, either the hydroxylated drimenol is further hydroxylated at C-2 and C-3 by an enzyme(s) not associated with the drt cluster, or the FAD-binding oxidoreductase drtC further oxidizes C-11 or C-12 to form the butyrolactone ring. DrtB, drtD and drtC are solely responsible for the formation of the different drimane structures observed during drimane sesquiterpenes biosynthesis. The polyketide synthase drtA synthesizes different lengths (C6 and C8) of PKS chains, which are then oxidized to varying degrees by the short-chain dehydrogenase drtF. Finally, these PKS chains are transferred onto drimane sesquiterpenes by the acyltransferase drtE, forming the sesquiterpene esters. In addition to the different fatty acyl-CoA chains produced by drtA, drtE is also able to use cinnamoyl-CoA as a substrate. This Aspergillus calidoustus protein is FAD-dependent monooxygenase drtC.